Here is a 438-residue protein sequence, read N- to C-terminus: Metacaspase-1B (438 aa).

Positions 1–125 are disordered; the sequence is MYYHHSHQGW…SQHFGRGAPS (125 aa). The segment covering 29 to 38 has biased composition (low complexity); that stretch reads PYPYSSNAQY. A compositionally biased stretch (pro residues) spans 39-74; it reads QPPPGPPPTSHYAPPPGPPPSHYYPPPGSYPSPAPS. Catalysis depends on residues His222 and Cys278.

It belongs to the peptidase C14B family.

Involved in cell death (apoptosis). In Aspergillus niger (strain ATCC MYA-4892 / CBS 513.88 / FGSC A1513), this protein is Metacaspase-1B (casB).